We begin with the raw amino-acid sequence, 298 residues long: Probable GTP 3',8-cyclase (298 aa).

Positions 4–221 constitute a Radical SAM core domain; sequence RYGREIRSFR…VFTRKFMQNR (218 aa). A GTP-binding site is contributed by Arg-13. Cys-20 and Cys-24 together coordinate [4Fe-4S] cluster. Residue Tyr-26 participates in S-adenosyl-L-methionine binding. Cys-27 provides a ligand contact to [4Fe-4S] cluster. Residue Lys-61 participates in GTP binding. Gly-65 is a binding site for S-adenosyl-L-methionine. Thr-91 provides a ligand contact to GTP. Ser-115 lines the S-adenosyl-L-methionine pocket. Lys-152 is a binding site for GTP. Cys-243 and Cys-246 together coordinate [4Fe-4S] cluster. 248–250 serves as a coordination point for GTP; sequence RIR. Cys-260 contributes to the [4Fe-4S] cluster binding site.

It belongs to the radical SAM superfamily. MoaA family. The cofactor is [4Fe-4S] cluster.

The catalysed reaction is GTP + AH2 + S-adenosyl-L-methionine = (8S)-3',8-cyclo-7,8-dihydroguanosine 5'-triphosphate + 5'-deoxyadenosine + L-methionine + A + H(+). It participates in cofactor biosynthesis; molybdopterin biosynthesis. Catalyzes the cyclization of GTP to (8S)-3',8-cyclo-7,8-dihydroguanosine 5'-triphosphate. The sequence is that of Probable GTP 3',8-cyclase from Methanococcus maripaludis (strain C7 / ATCC BAA-1331).